The sequence spans 115 residues: Large ribosomal subunit protein bL20 (115 aa).

The protein belongs to the bacterial ribosomal protein bL20 family.

Binds directly to 23S ribosomal RNA and is necessary for the in vitro assembly process of the 50S ribosomal subunit. It is not involved in the protein synthesizing functions of that subunit. In Synechococcus sp. (strain CC9311), this protein is Large ribosomal subunit protein bL20.